The sequence spans 1042 residues: SWI/SNF-related matrix-associated actin-dependent regulator of chromatin subfamily A member 1 (1042 aa).

The interval 25–82 is disordered; that stretch reads EDEQPGPSTSQEEGAAAAATEATAATEKGEKKKEKNVSSFQLKLAAKAPKSEKEMDPE. Low complexity predominate over residues 36–50; sequence EEGAAAAATEATAAT. Composition is skewed to basic and acidic residues over residues 51–60 and 73–82; these read EKGEKKKEKN and PKSEKEMDPE. Phosphoserine occurs at positions 116 and 119. Residues 195–360 form the Helicase ATP-binding domain; that stretch reads ISLYENGVNG…WALLNFLLPD (166 aa). 208 to 215 is an ATP binding site; sequence DEMGLGKT. Residues 311-314 carry the DEAH box motif; the sequence is DEAH. The Helicase C-terminal domain occupies 490–641; it reads VLDKLLAKLK…SIVIQQGRLI (152 aa). Residues K650, K716, and K738 each participate in a glycyl lysine isopeptide (Lys-Gly) (interchain with G-Cter in SUMO2) cross-link. Residues 819–849 are disordered; the sequence is EQKKIDGAEPLTPEETEEKEKLLTQGFTNWT. Residues 828–837 are compositionally biased toward basic and acidic residues; sequence PLTPEETEEK. In terms of domain architecture, SANT 1 spans 843 to 895; sequence QGFTNWTKRDFNQFIKANEKYGRDDIDNIAREVEGKSPEEVMEYSAVFWERCN. Position 942 is a phosphotyrosine (Y942). The region spanning 946–1010 is the SANT 2 domain; sequence KGKNYTEEED…QRRCNTLISL (65 aa).

Belongs to the SNF2/RAD54 helicase family. ISWI subfamily. May form homodimers. Component of the ACF-1 ISWI chromatin remodeling complex at least composed of SMARCA1 and BAZ1A, which regulates the spacing of histone octamers on the DNA template to facilitate access to DNA. Within the complex interacts with BAZ1A; the interaction is direct. Component of the WICH-1 ISWI chromatin remodeling complex at least composed of SMARCA1 and BAZ1B/WSTF. Within the complex interacts with BAZ1B/WSTF. Component of the NoRC-1 ISWI chromatin remodeling complex at least composed of SMARCA1 and BAZ2A/TIP5. Within the complex interacts with BAZ2A/TIP5. Component of the BRF-1 ISWI chromatin remodeling complex at least composed of SMARCA1 and BAZ2B. Within the complex interacts with BAZ2B. Component of the NURF-1 ISWI chromatin remodeling complex (also called the nucleosome-remodeling factor (NURF) complex) at least composed of SMARCA1, BPTF, RBBP4 and RBBP7. Within the complex interacts with BPTF. Within the complex interacts with RBBP4 and RBBP7. Component of the CERF-1 ISWI chromatin remodeling complex (also called the CECR2-containing-remodeling factor (CERF) complex) at least composed of CECR2 and SMARCA1. LUZP1 is detected as part of the CERF-1 complex in embryonic stem cells where it is involved in complex stabilization but is not detected in the complex in the testis. Component of the RSF-1 ISWI chromatin remodeling complex at least composed of SMARCA1 and RSF1. Within the complex interacts with RSF1. Interacts with PRLR. Interacts with ERCC6. In terms of assembly, may form homodimers. Component of the BPFT-SMARCA1 complex at least composed of SMARCA1, BPFT, RBBP4 and RBBP7; the complex is catalytically inactive and does not remodel chromatin. Within the complex interacts with BPTF, RBBP4 and RBBP7. Component of the BAZ1A-1-SMARCA1 complex at least composed of SMARCA1 and BAZ1A; the complex is catalytically inactive and does not remodel chromatin. Component of the BAZ1B-1-SMARCA1 complex at least composed of SMARCA1 and BAZ1B; the complex is catalytically inactive and does not remodel chromatin. As to expression, expressed in lung, breast, kidney, ovary, skeletal muscle and brain. In terms of tissue distribution, mainly expressed in non-neuronal tissues such as lung, breast, kidney, and ovary.

Its subcellular location is the nucleus. The protein resides in the chromosome. The enzyme catalyses ATP + H2O = ADP + phosphate + H(+). ATPase that possesses intrinsic ATP-dependent chromatin-remodeling activity. ATPase activity is substrate-dependent, and is increased when nucleosomes are the substrate, but is also catalytically active when DNA alone is the substrate. Catalytic subunit of ISWI chromatin-remodeling complexes, which form ordered nucleosome arrays on chromatin and facilitate access to DNA during DNA-templated processes such as DNA replication, transcription, and repair. Within the ISWI chromatin-remodeling complexes, slides edge- and center-positioned histone octamers away from their original location on the DNA template. Catalytic activity and histone octamer sliding propensity is regulated and determined by components of the ISWI chromatin-remodeling complexes. The BAZ1A-, BAZ1B-, BAZ2A- and BAZ2B-containing ISWI chromatin-remodeling complexes regulate the spacing of nucleosomes along the chromatin and have the ability to slide mononucleosomes to the center of a DNA template. The CECR2- and RSF1-containing ISWI chromatin-remodeling complexes do not have the ability to slide mononucleosomes to the center of a DNA template. Within the NURF-1 and CERF-1 ISWI chromatin remodeling complexes, nucleosomes are the preferred substrate for its ATPase activity. Within the NURF-1 ISWI chromatin-remodeling complex, binds to the promoters of En1 and En2 to positively regulate their expression and promote brain development. May promote neurite outgrowth. May be involved in the development of luteal cells. Facilitates nucleosome assembly during DNA replication, ensuring replication fork progression and genomic stability by preventing replication stress and nascent DNA gaps. Functionally, catalytically inactive when either DNA or nucleosomes are the substrate and does not possess chromatin-remodeling activity. Acts as a negative regulator of chromatin remodelers by generating inactive complexes. This is SWI/SNF-related matrix-associated actin-dependent regulator of chromatin subfamily A member 1 from Homo sapiens (Human).